The following is a 735-amino-acid chain: ATP-dependent DNA helicase Hel308 (735 aa).

Residues Gln32 and 50–57 (APTGSGKT) contribute to the ATP site. In terms of domain architecture, Helicase ATP-binding spans 37–201 (QAGVEKGENL…WIGGKIVESS (165 aa)). Residues 146 to 149 (DEIH) carry the DEAH box motif. Positions 235–431 (DLDLAAEAIE…GLRGLRHFIL (197 aa)) constitute a Helicase C-terminal domain.

This sequence belongs to the helicase family. Hel308 subfamily. As to quaternary structure, monomer.

The enzyme catalyses Couples ATP hydrolysis with the unwinding of duplex DNA by translocating in the 3'-5' direction.. It catalyses the reaction ATP + H2O = ADP + phosphate + H(+). In terms of biological role, DNA-dependent ATPase and 3'-5' DNA helicase that may be involved in repair of stalled replication forks. This chain is ATP-dependent DNA helicase Hel308, found in Aeropyrum pernix (strain ATCC 700893 / DSM 11879 / JCM 9820 / NBRC 100138 / K1).